Here is a 343-residue protein sequence, read N- to C-terminus: Sodium/bile acid cotransporter 7-A (343 aa).

Residues 1–10 (MGLLERLRKE) are Cytoplasmic-facing. The helical transmembrane segment at 11-31 (WFIVGIILVIAAAKLEPTVGV) threads the bilayer. Topologically, residues 32–37 (KGGPLK) are extracellular. The helical transmembrane segment at 38–58 (PEITITYIAVSAIFFNSGLSL) threads the bilayer. Residues 59–71 (KTEELTNALMHVK) are Cytoplasmic-facing. Residues 72-92 (LHLFVQLFTLVFFPTAIWLFL) form a helical membrane-spanning segment. Residues 93–116 (QVLSLTPINEWLLKGLQTVSCMPP) are Extracellular-facing. The helical transmembrane segment at 117-137 (PVSSAVILTKAVGGNEAAAIF) threads the bilayer. Residue N138 is a topological domain, cytoplasmic. The helical transmembrane segment at 139–159 (SAFGSFLGIVVTPLLLLLFLG) threads the bilayer. At 160-163 (SSSS) the chain is on the extracellular side. Residues 164–184 (VPFTSIFSQLFMTVVVPLIIG) form a helical membrane-spanning segment. At 185–201 (QIVRRYIKDWLERKKPP) the chain is on the cytoplasmic side. A helical membrane pass occupies residues 202–222 (FGAISSCVLLMIIYTTFCDTF). Residues 223–234 (SNPNIDLDTFSL) are Extracellular-facing. The chain crosses the membrane as a helical span at residues 235–255 (VVIVFIIFFIQLAFMLLTFLF). Over 256 to 270 (STSKNSGFTPADTVA) the chain is Cytoplasmic. The chain crosses the membrane as a helical span at residues 271–291 (IVFCSTHKSLTLGIPMLKIVF). At 292-298 (VGYEHLS) the chain is on the extracellular side. A helical transmembrane segment spans residues 299-319 (LISVPLLIYHPAQILLGSVLV). At 320–343 (PTIKSWMLSRQKALKLTRQPKIPL) the chain is on the cytoplasmic side.

It belongs to the bile acid:sodium symporter (BASS) (TC 2.A.28) family. In terms of tissue distribution, strongly expressed in small intestine. Moderately expressed in spleen. Weakly expressed in skeletal muscle. Not detected in other tissues tested.

The protein localises to the cell membrane. It is found in the endoplasmic reticulum membrane. It localises to the golgi apparatus membrane. Involved in teeth and skeletal development. Has an essential role in the biosynthesis and trafficking of glycosaminoglycans and glycoproteins to produce a proper functioning extracellular matrix. Required for extracellular matrix mineralization. Also involved in the regulation of cellular calcium homeostasis. Does not show transport activity towards bile acids or steroid sulfates. The polypeptide is Sodium/bile acid cotransporter 7-A (slc10a7-a) (Xenopus laevis (African clawed frog)).